A 429-amino-acid polypeptide reads, in one-letter code: Enolase (429 aa).

Gln-163 provides a ligand contact to (2R)-2-phosphoglycerate. Glu-205 serves as the catalytic Proton donor. 3 residues coordinate Mg(2+): Asp-242, Glu-287, and Asp-314. (2R)-2-phosphoglycerate is bound by residues Lys-339, Arg-368, Ser-369, and Lys-390. Lys-339 serves as the catalytic Proton acceptor.

Belongs to the enolase family. Requires Mg(2+) as cofactor.

Its subcellular location is the cytoplasm. It is found in the secreted. The protein localises to the cell surface. The enzyme catalyses (2R)-2-phosphoglycerate = phosphoenolpyruvate + H2O. It functions in the pathway carbohydrate degradation; glycolysis; pyruvate from D-glyceraldehyde 3-phosphate: step 4/5. Catalyzes the reversible conversion of 2-phosphoglycerate (2-PG) into phosphoenolpyruvate (PEP). It is essential for the degradation of carbohydrates via glycolysis. The chain is Enolase from Salinibacter ruber (strain DSM 13855 / M31).